The primary structure comprises 364 residues: Peptide chain release factor 2 (364 aa).

The residue at position 252 (Gln252) is an N5-methylglutamine.

The protein belongs to the prokaryotic/mitochondrial release factor family. Post-translationally, methylated by PrmC. Methylation increases the termination efficiency of RF2.

Its subcellular location is the cytoplasm. Its function is as follows. Peptide chain release factor 2 directs the termination of translation in response to the peptide chain termination codons UGA and UAA. This Clostridium perfringens (strain SM101 / Type A) protein is Peptide chain release factor 2.